The sequence spans 510 residues: NAD(P)H-quinone oxidoreductase subunit 2 A, chloroplastic (510 aa).

Helical transmembrane passes span 24 to 44, 57 to 77, 99 to 119, 124 to 144, 149 to 169, 183 to 203, 227 to 247, 295 to 315, 323 to 343, 354 to 374, 395 to 415, 418 to 438, and 484 to 504; these read LLLF…GLIL, IPWL…ALLF, IFQF…VEYI, MAIT…MFLC, LITI…LSGY, YLLM…WLYG, PGIS…LSLA, WHLL…LIAI, MLAY…IVGD, YMLF…SFGL, ALSL…AGFF, LHLF…IGLL, and MIVC…IIAI.

Belongs to the complex I subunit 2 family. NDH is composed of at least 16 different subunits, 5 of which are encoded in the nucleus.

It is found in the plastid. Its subcellular location is the chloroplast thylakoid membrane. It carries out the reaction a plastoquinone + NADH + (n+1) H(+)(in) = a plastoquinol + NAD(+) + n H(+)(out). The enzyme catalyses a plastoquinone + NADPH + (n+1) H(+)(in) = a plastoquinol + NADP(+) + n H(+)(out). NDH shuttles electrons from NAD(P)H:plastoquinone, via FMN and iron-sulfur (Fe-S) centers, to quinones in the photosynthetic chain and possibly in a chloroplast respiratory chain. The immediate electron acceptor for the enzyme in this species is believed to be plastoquinone. Couples the redox reaction to proton translocation, and thus conserves the redox energy in a proton gradient. This Ranunculus macranthus (Large buttercup) protein is NAD(P)H-quinone oxidoreductase subunit 2 A, chloroplastic.